Here is a 353-residue protein sequence, read N- to C-terminus: MTATLERRANATVWGRFCSWITSTENRLYIGWFGVLMIPTLLTATSVFIVAFIAAPPVDIDGIREPVSGSLMYGNNIISGAVIPTSNAIGLHFYPIWEAASLDEWLYNGGPYQLIVCHFFIGICSYMGREWELSFRLGMRPWIAVAYSAPVAAATAVFLIYPIGQGSFSDGMPLGISGTFNFMIVFQAEHNILMHPFHMLGVAGVFGGSLFSAMHGSLVTSSLIRETTENESANAGYKFGQEEETYNIVAAHGYFGRLIFQYASFNNSRSLHFFLAIWPVMGIWFTALGISTMAFNLNGFNFNQSVVDSNGRVINTWADIVNRANLGMEVMHERNAHNFPLDLASVEAPSINA.

Threonine 2 bears the N-acetylthreonine mark. Residue threonine 2 is modified to Phosphothreonine. The next 3 helical transmembrane spans lie at 29 to 46, 118 to 133, and 142 to 156; these read YIGW…TATS, HFFI…EWEL, and WIAV…AATA. Chlorophyll a is bound at residue histidine 118. Pheophytin a is bound at residue tyrosine 126. [CaMn4O5] cluster-binding residues include aspartate 170 and glutamate 189. The chain crosses the membrane as a helical span at residues 197–218; the sequence is FHMLGVAGVFGGSLFSAMHGSL. Chlorophyll a is bound at residue histidine 198. A quinone contacts are provided by residues histidine 215 and 264-265; that span reads SF. Residue histidine 215 coordinates Fe cation. Residue histidine 272 coordinates Fe cation. The chain crosses the membrane as a helical span at residues 274 to 288; sequence FLAIWPVMGIWFTAL. Residues histidine 332, glutamate 333, aspartate 342, and alanine 344 each coordinate [CaMn4O5] cluster. A propeptide spanning residues 345-353 is cleaved from the precursor; it reads SVEAPSINA.

It belongs to the reaction center PufL/M/PsbA/D family. PSII is composed of 1 copy each of membrane proteins PsbA, PsbB, PsbC, PsbD, PsbE, PsbF, PsbH, PsbI, PsbJ, PsbK, PsbL, PsbM, PsbT, PsbX, PsbY, PsbZ, Psb30/Ycf12, at least 3 peripheral proteins of the oxygen-evolving complex and a large number of cofactors. It forms dimeric complexes. The cofactor is The D1/D2 heterodimer binds P680, chlorophylls that are the primary electron donor of PSII, and subsequent electron acceptors. It shares a non-heme iron and each subunit binds pheophytin, quinone, additional chlorophylls, carotenoids and lipids. D1 provides most of the ligands for the Mn4-Ca-O5 cluster of the oxygen-evolving complex (OEC). There is also a Cl(-1) ion associated with D1 and D2, which is required for oxygen evolution. The PSII complex binds additional chlorophylls, carotenoids and specific lipids.. In terms of processing, tyr-161 forms a radical intermediate that is referred to as redox-active TyrZ, YZ or Y-Z. Post-translationally, C-terminally processed by CTPA; processing is essential to allow assembly of the oxygen-evolving complex and thus photosynthetic growth.

It localises to the plastid. The protein localises to the chloroplast thylakoid membrane. It carries out the reaction 2 a plastoquinone + 4 hnu + 2 H2O = 2 a plastoquinol + O2. Photosystem II (PSII) is a light-driven water:plastoquinone oxidoreductase that uses light energy to abstract electrons from H(2)O, generating O(2) and a proton gradient subsequently used for ATP formation. It consists of a core antenna complex that captures photons, and an electron transfer chain that converts photonic excitation into a charge separation. The D1/D2 (PsbA/PsbD) reaction center heterodimer binds P680, the primary electron donor of PSII as well as several subsequent electron acceptors. The polypeptide is Photosystem II protein D1 (Ostreococcus tauri).